We begin with the raw amino-acid sequence, 507 residues long: Probable DNA ligase (507 aa).

Glutamate 209 is a binding site for ATP. Lysine 211 functions as the N6-AMP-lysine intermediate in the catalytic mechanism. ATP contacts are provided by arginine 216, arginine 231, glutamate 260, phenylalanine 295, arginine 366, and lysine 372.

Belongs to the ATP-dependent DNA ligase family. Mg(2+) serves as cofactor.

It carries out the reaction ATP + (deoxyribonucleotide)n-3'-hydroxyl + 5'-phospho-(deoxyribonucleotide)m = (deoxyribonucleotide)n+m + AMP + diphosphate.. In terms of biological role, DNA ligase that seals nicks in double-stranded DNA during DNA replication, DNA recombination and DNA repair. This chain is Probable DNA ligase, found in Pseudarthrobacter chlorophenolicus (strain ATCC 700700 / DSM 12829 / CIP 107037 / JCM 12360 / KCTC 9906 / NCIMB 13794 / A6) (Arthrobacter chlorophenolicus).